Reading from the N-terminus, the 227-residue chain is Cytochrome c oxidase subunit 2 (227 aa).

Residues 1–14 (MAYPVQLGFQDAAS) lie on the Mitochondrial intermembrane side of the membrane. The chain crosses the membrane as a helical span at residues 15-45 (PIMEELLYFHDHTLMIMFLISSLVLYIISLM). Over 46 to 59 (LTTELIHTSTMDAQ) the chain is Mitochondrial matrix. The helical transmembrane segment at 60 to 87 (EVETVWTILPAVILILIALPSLRILYMM) threads the bilayer. At 88-227 (DEISTPSLTL…HFEEWLLSML (140 aa)) the chain is on the mitochondrial intermembrane side. Cu cation is bound by residues H161, C196, E198, C200, H204, and M207. Position 198 (E198) interacts with Mg(2+).

This sequence belongs to the cytochrome c oxidase subunit 2 family. In terms of assembly, component of the cytochrome c oxidase (complex IV, CIV), a multisubunit enzyme composed of 14 subunits. The complex is composed of a catalytic core of 3 subunits MT-CO1, MT-CO2 and MT-CO3, encoded in the mitochondrial DNA, and 11 supernumerary subunits COX4I, COX5A, COX5B, COX6A, COX6B, COX6C, COX7A, COX7B, COX7C, COX8 and NDUFA4, which are encoded in the nuclear genome. The complex exists as a monomer or a dimer and forms supercomplexes (SCs) in the inner mitochondrial membrane with NADH-ubiquinone oxidoreductase (complex I, CI) and ubiquinol-cytochrome c oxidoreductase (cytochrome b-c1 complex, complex III, CIII), resulting in different assemblies (supercomplex SCI(1)III(2)IV(1) and megacomplex MCI(2)III(2)IV(2)). Found in a complex with TMEM177, COA6, COX18, COX20, SCO1 and SCO2. Interacts with TMEM177 in a COX20-dependent manner. Interacts with COX20. Interacts with COX16. It depends on Cu cation as a cofactor.

It is found in the mitochondrion inner membrane. It catalyses the reaction 4 Fe(II)-[cytochrome c] + O2 + 8 H(+)(in) = 4 Fe(III)-[cytochrome c] + 2 H2O + 4 H(+)(out). Its function is as follows. Component of the cytochrome c oxidase, the last enzyme in the mitochondrial electron transport chain which drives oxidative phosphorylation. The respiratory chain contains 3 multisubunit complexes succinate dehydrogenase (complex II, CII), ubiquinol-cytochrome c oxidoreductase (cytochrome b-c1 complex, complex III, CIII) and cytochrome c oxidase (complex IV, CIV), that cooperate to transfer electrons derived from NADH and succinate to molecular oxygen, creating an electrochemical gradient over the inner membrane that drives transmembrane transport and the ATP synthase. Cytochrome c oxidase is the component of the respiratory chain that catalyzes the reduction of oxygen to water. Electrons originating from reduced cytochrome c in the intermembrane space (IMS) are transferred via the dinuclear copper A center (CU(A)) of subunit 2 and heme A of subunit 1 to the active site in subunit 1, a binuclear center (BNC) formed by heme A3 and copper B (CU(B)). The BNC reduces molecular oxygen to 2 water molecules using 4 electrons from cytochrome c in the IMS and 4 protons from the mitochondrial matrix. The protein is Cytochrome c oxidase subunit 2 (MT-CO2) of Eulemur macaco (Black lemur).